We begin with the raw amino-acid sequence, 615 residues long: 1-deoxy-D-xylulose-5-phosphate synthase (615 aa).

Thiamine diphosphate is bound by residues H72 and G111 to S113. Residue D142 coordinates Mg(2+). Thiamine diphosphate contacts are provided by residues G143–A144, N171, Y278, and E360. N171 is a Mg(2+) binding site.

Belongs to the transketolase family. DXPS subfamily. Homodimer. It depends on Mg(2+) as a cofactor. Requires thiamine diphosphate as cofactor.

The catalysed reaction is D-glyceraldehyde 3-phosphate + pyruvate + H(+) = 1-deoxy-D-xylulose 5-phosphate + CO2. Its pathway is metabolic intermediate biosynthesis; 1-deoxy-D-xylulose 5-phosphate biosynthesis; 1-deoxy-D-xylulose 5-phosphate from D-glyceraldehyde 3-phosphate and pyruvate: step 1/1. In terms of biological role, catalyzes the acyloin condensation reaction between C atoms 2 and 3 of pyruvate and glyceraldehyde 3-phosphate to yield 1-deoxy-D-xylulose-5-phosphate (DXP). The sequence is that of 1-deoxy-D-xylulose-5-phosphate synthase from Campylobacter jejuni (strain RM1221).